The sequence spans 388 residues: Basigin (388 aa).

Positions methionine 1–alanine 22 are cleaved as a signal peptide. The Extracellular portion of the chain corresponds to alanine 23–alanine 326. Positions glycine 37 to threonine 120 constitute an Ig-like domain. 3 disulfide bridges follow: cysteine 44/cysteine 108, cysteine 157/cysteine 203, and cysteine 242/cysteine 304. The region spanning glutamate 138–glycine 219 is the Ig-like C2-type domain. Residues asparagine 160, asparagine 269, and asparagine 305 are each glycosylated (N-linked (GlcNAc...) asparagine). One can recognise an Ig-like V-type domain in the interval proline 221–arginine 320. Residues alanine 327 to isoleucine 347 traverse the membrane as a helical segment. Over tyrosine 348 to threonine 388 the chain is Cytoplasmic. Residues aspartate 355–threonine 388 are disordered. Residue threonine 357 is modified to Phosphothreonine. At serine 371 the chain carries Phosphoserine.

As to quaternary structure, homooligomer. Interacts with NXNL1, SLC2A1 and SLC16A1/GLUT1. Interacts with XKR8; promoting its localization at the cell membrane. Homooligomer. Interacts with SLC16A1; interaction mediates SLC16A1 targeting to the plasma membrane. Interacts with SLC16A3; interaction mediates SLC16A3 targeting to the plasma membrane. Interacts with VEGFA, KDR/VEGFR2, PPIA/CYPA, SLC16A12, SLC16A11, ATP1B2, MAG, L1CAM and AJAP1. Interacts with PPIL2; regulates BSG transport to the cell membrane. In terms of assembly, interacts with SLC16A6; this interaction mediates targeting to the plasma membrane. Expressed in the skeletal muscle, liver, small intestine, kidney, testis, brain, heart and spleen. Also present in various immature cells and endothelia.

It is found in the cell membrane. Its subcellular location is the photoreceptor inner segment. It localises to the cell projection. The protein localises to the cilium. The protein resides in the photoreceptor outer segment. It is found in the endoplasmic reticulum membrane. Its subcellular location is the basolateral cell membrane. In terms of biological role, essential for normal retinal maturation and development. Acts as a retinal cell surface receptor for NXNL1 and plays an important role in NXNL1-mediated survival of retinal cone photoreceptors. In association with glucose transporter SLC16A1/GLUT1 and NXNL1, promotes retinal cone survival by enhancing aerobic glycolysis and accelerating the entry of glucose into photoreceptors. Its function is as follows. Signaling receptor for cyclophilins, essential for PPIA/CYPA and PPIB/CYPB-dependent signaling related to chemotaxis and adhesion of immune cells. Plays an important role in targeting the monocarboxylate transporters SLC16A1/GLUT1 and SLC16A3 to the plasma membrane. Acts as a coreceptor for vascular endothelial growth factor receptor 2 (KDR/VEGFR2) in endothelial cells enhancing its VEGFA-mediated activation and downstream signaling. Promotes angiogenesis through EPAS1/HIF2A-mediated up-regulation of VEGFA and KDR/VEGFR2 in endothelial cells. Plays an important role in spermatogenesis; mediates interactions between germ cells and Sertoli cell and is essential for the development/differentiation of germ cells to round spermatids. This chain is Basigin (Bsg), found in Rattus norvegicus (Rat).